The chain runs to 215 residues: Probable nicotinate-nucleotide adenylyltransferase (215 aa).

It belongs to the NadD family.

It catalyses the reaction nicotinate beta-D-ribonucleotide + ATP + H(+) = deamido-NAD(+) + diphosphate. The protein operates within cofactor biosynthesis; NAD(+) biosynthesis; deamido-NAD(+) from nicotinate D-ribonucleotide: step 1/1. Functionally, catalyzes the reversible adenylation of nicotinate mononucleotide (NaMN) to nicotinic acid adenine dinucleotide (NaAD). The chain is Probable nicotinate-nucleotide adenylyltransferase from Fervidobacterium nodosum (strain ATCC 35602 / DSM 5306 / Rt17-B1).